Reading from the N-terminus, the 479-residue chain is MASSDTQGKRVAVIGGGLVGALNACFLAKRNFQVDVYEAREDIRVAKSARGRSINLALSYRGRQALKAIGLEDQIVSKGVPMKARMIHSLSGKKSAIPYGNKSQYILSISRENLNKDLLTAVESYANAKVHFGHKLSKCIPEEGVLTVLGPDKVPRDVTCDLVVGCDGAYSTVRAHLMKKPRFDYTQQYIPHGYMELTIPPKNGEYAMEPNCLHIWPRNAYMMIALPNMDKSFTCTLFMPFEEFERLPTRSDVLDFFQKNFPDAIPLMGEQALMRDFFLLPAQPMISVKCSPFHLKSHCVLMGDAAHAIVPFFGQGMNAGFEDCLVFDELMDKFNNNLSMCLPEFSRFRIPDDHAISDLSMYNYIEMRAHVNSRWFLFQKLLDKFLHAIMPSTFIPLYTMVAFTRIRYHEAVLRWHWQKKVINRGLFVLGSLIAIGGTYLLVHHLSLRPLEFLRRPAWMGTTGYWTRSTDISLQVPWSY.

FAD contacts are provided by residues V19, 37-40 (YEAR), and A57. L-kynurenine contacts are provided by R85 and Y99. Residues R111, L136, T172, D304, and 317–318 (MN) each bind FAD. The L-kynurenine site is built by N363 and Y398. The next 2 helical transmembrane spans lie at 385–404 (FLHAIMPSTFIPLYTMVAFT) and 425–445 (GLFVLGSLIAIGGTYLLVHHL).

This sequence belongs to the aromatic-ring hydroxylase family. KMO subfamily. FAD is required as a cofactor. As to expression, expressed by organs containing secondary lymphoid tissue, such as the lung, spleen, mesenteric lymph node, thymus and peripheral lymph nodes.

The protein resides in the mitochondrion outer membrane. It catalyses the reaction L-kynurenine + NADPH + O2 + H(+) = 3-hydroxy-L-kynurenine + NADP(+) + H2O. The protein operates within cofactor biosynthesis; NAD(+) biosynthesis; quinolinate from L-kynurenine: step 1/3. Catalyzes the hydroxylation of L-kynurenine (L-Kyn) to form 3-hydroxy-L-kynurenine (L-3OHKyn). Required for synthesis of quinolinic acid, a neurotoxic NMDA receptor antagonist and potential endogenous inhibitor of NMDA receptor signaling in axonal targeting, synaptogenesis and apoptosis during brain development. Quinolinic acid may also affect NMDA receptor signaling in pancreatic beta cells, osteoblasts, myocardial cells, and the gastrointestinal tract. The polypeptide is Kynurenine 3-monooxygenase (Mus musculus (Mouse)).